The sequence spans 492 residues: Coagulation factor X (492 aa).

The N-terminal stretch at 1 to 23 is a signal peptide; it reads MAGLLHLVLLSTALGGLLRPAGS. A propeptide spanning residues 24-40 is cleaved from the precursor; the sequence is VFLPRDQAHRVLQRARR. Residues 41–85 form the Gla domain; that stretch reads ANSFLEEVKQGNLERECLEEACSLEEAREVFEDAEQTDEFWSKYK. Residues Glu-46, Glu-47, Glu-54, Glu-56, Glu-59, Glu-60, Glu-65, Glu-66, Glu-69, Glu-72, Glu-75, and Glu-79 each carry the 4-carboxyglutamate modification. An intrachain disulfide couples Cys-57 to Cys-62. The EGF-like 1; calcium-binding domain occupies 86–122; sequence DGDQCEGHPCLNQGHCKDGIGDYTCTCAEGFEGKNCE. 11 cysteine pairs are disulfide-bonded: Cys-90-Cys-101, Cys-95-Cys-110, Cys-112-Cys-121, Cys-129-Cys-140, Cys-136-Cys-149, Cys-151-Cys-164, Cys-172-Cys-341, Cys-240-Cys-245, Cys-260-Cys-276, Cys-389-Cys-403, and Cys-414-Cys-442. (3R)-3-hydroxyaspartate is present on Asp-103. In terms of domain architecture, EGF-like 2 spans 125-165; it reads TREICSLDNGGCDQFCREERSEVRCSCAHGYVLGDDSKSCV. Positions 183–233 are cleaved as a propeptide — activation peptide; that stretch reads WAIHTSEDALDASELEHYDPADLSPTESSLDLLGLNRTEPSAGEDGSQVVR. A Sulfotyrosine modification is found at Tyr-200. A glycan (O-linked (GalNAc...) threonine) is linked at Thr-208. N-linked (GlcNAc...) asparagine glycosylation occurs at Asn-218. One can recognise a Peptidase S1 domain in the interval 234–466; it reads IVGGRDCAEG…FLKWIDKIMK (233 aa). Active-site charge relay system residues include His-275 and Asp-321. Ser-418 acts as the Charge relay system in catalysis. The disordered stretch occupies residues 472 to 492; the sequence is AGSRGHSEAPATWTVPPPLPL. The propeptide at 476-492 is may be removed but is not necessary for activation; that stretch reads GHSEAPATWTVPPPLPL. Residue Thr-485 is glycosylated (O-linked (GalNAc...) threonine).

This sequence belongs to the peptidase S1 family. In terms of assembly, the two chains are formed from a single-chain precursor by the excision of two Arg residues and are held together by 1 or more disulfide bonds. Forms a heterodimer with SERPINA5. Interacts (activated) with guianensin, an anticoagulant protein from Simulium guianense saliva. Interacts (activated) with simukunin, an anticoagulant protein from Simulium vittatum saliva. The vitamin K-dependent, enzymatic carboxylation of some glutamate residues allows the modified protein to bind calcium. In terms of processing, N- and O-glycosylated. Post-translationally, proteolytically cleaved and activated by cathepsin CTSG. The activation peptide is cleaved by factor IXa (in the intrinsic pathway), or by factor VIIa (in the extrinsic pathway). The iron and 2-oxoglutarate dependent 3-hydroxylation of aspartate and asparagine is (R) stereospecific within EGF domains.

The protein resides in the secreted. It catalyses the reaction Selective cleavage of Arg-|-Thr and then Arg-|-Ile bonds in prothrombin to form thrombin.. Inhibited by SERPINA5. Its function is as follows. Factor Xa is a vitamin K-dependent glycoprotein that converts prothrombin to thrombin in the presence of factor Va, calcium and phospholipid during blood clotting. Factor Xa activates pro-inflammatory and pro-fibrotic signaling pathways in a protease-activated receptor (PAR)-dependent manner. In Bos taurus (Bovine), this protein is Coagulation factor X (F10).